Consider the following 330-residue polypeptide: Ribose-phosphate pyrophosphokinase (330 aa).

Asp-55–Glu-57 contacts ATP. Residues His-148 and Asp-187 each coordinate Mg(2+). Residue Lys-211 is part of the active site. D-ribose 5-phosphate contacts are provided by residues Arg-213, Asp-237, and Asp-241 to Thr-245.

Belongs to the ribose-phosphate pyrophosphokinase family. Class I subfamily. As to quaternary structure, homohexamer. Mg(2+) is required as a cofactor.

The protein resides in the cytoplasm. The catalysed reaction is D-ribose 5-phosphate + ATP = 5-phospho-alpha-D-ribose 1-diphosphate + AMP + H(+). It functions in the pathway metabolic intermediate biosynthesis; 5-phospho-alpha-D-ribose 1-diphosphate biosynthesis; 5-phospho-alpha-D-ribose 1-diphosphate from D-ribose 5-phosphate (route I): step 1/1. Its function is as follows. Involved in the biosynthesis of the central metabolite phospho-alpha-D-ribosyl-1-pyrophosphate (PRPP) via the transfer of pyrophosphoryl group from ATP to 1-hydroxyl of ribose-5-phosphate (Rib-5-P). This is Ribose-phosphate pyrophosphokinase from Nostoc sp. (strain PCC 7120 / SAG 25.82 / UTEX 2576).